Consider the following 427-residue polypeptide: Serine--tRNA ligase (427 aa).

L-serine is bound at residue 231–233; the sequence is TAE. Residues 262-264 and V278 each bind ATP; that span reads RRE. E285 contacts L-serine. 349–352 lines the ATP pocket; that stretch reads EVSS. Residue S384 participates in L-serine binding.

It belongs to the class-II aminoacyl-tRNA synthetase family. Type-1 seryl-tRNA synthetase subfamily. As to quaternary structure, homodimer. The tRNA molecule binds across the dimer.

Its subcellular location is the cytoplasm. It catalyses the reaction tRNA(Ser) + L-serine + ATP = L-seryl-tRNA(Ser) + AMP + diphosphate + H(+). The enzyme catalyses tRNA(Sec) + L-serine + ATP = L-seryl-tRNA(Sec) + AMP + diphosphate + H(+). Its pathway is aminoacyl-tRNA biosynthesis; selenocysteinyl-tRNA(Sec) biosynthesis; L-seryl-tRNA(Sec) from L-serine and tRNA(Sec): step 1/1. Functionally, catalyzes the attachment of serine to tRNA(Ser). Is also able to aminoacylate tRNA(Sec) with serine, to form the misacylated tRNA L-seryl-tRNA(Sec), which will be further converted into selenocysteinyl-tRNA(Sec). This chain is Serine--tRNA ligase, found in Chlamydia pneumoniae (Chlamydophila pneumoniae).